A 566-amino-acid chain; its full sequence is Membrane protein insertase YidC (566 aa).

A helical membrane pass occupies residues 7–27 (ILIVALAIVSYVMVLKWNQDY). Residues 38 to 72 (ASSTTAPGLPDAPTGTSAANDDIPRAASDTTAPAE) form a disordered region. A run of 5 helical transmembrane segments spans residues 347–367 (LELTVDYGFLWFIAQPIFWLL), 373–393 (LVGNWGWSIIFLTMLIKGIFF), 443–463 (LGGCLPILVQMPVFLSLYWVL), 474–494 (FMLWITDLSIKDPFFILPIIM), and 521–541 (PIIFTFFFLWFPAGLVLYWVV).

Belongs to the OXA1/ALB3/YidC family. Type 1 subfamily. In terms of assembly, interacts with the Sec translocase complex via SecD. Specifically interacts with transmembrane segments of nascent integral membrane proteins during membrane integration.

It localises to the cell inner membrane. In terms of biological role, required for the insertion and/or proper folding and/or complex formation of integral membrane proteins into the membrane. Involved in integration of membrane proteins that insert both dependently and independently of the Sec translocase complex, as well as at least some lipoproteins. Aids folding of multispanning membrane proteins. The sequence is that of Membrane protein insertase YidC from Pseudomonas fluorescens (strain ATCC BAA-477 / NRRL B-23932 / Pf-5).